The sequence spans 445 residues: MSIHIKQSTMVRPAEETPNKSLWLSKIDMILRTPYSHTGAVLIYKQPDNNEDNIQPSSSMYFDANILIEALSKALVPYYPMAGRLKINGDRYEIDCNGEGALFVEAESSHVLEDFGDFRPNDELHRVMVPTCDYSKGISSFPLLMVQLTRFRCGGVSIGFAQHHHVCDRMSHFEFNNSWARIAKGLLPALEPVHDRYLHLCPRNPPQIKYTHSQFEPFVPSLPKELLDGKTSKSQTLFKLSREQINTLKQKLDWSNTTTRLSTYEVVAGHVWRSVSKARGLSDHEEIKLIMPVDGRSRINNPSLPKGYCGNVVFLAVCTATVGDLACNPLTDTAGKVQEALKGLDDDYLRSAIDHTESKPDLPVPYMGSPEKTLYPNVLVNSWGRIPYQAMDFGWGNPTFFGISNIFYDGQCFLIPSQNGDGSMTLAINLFSSHLSLFKKHFYDF.

Active-site proton acceptor residues include histidine 164 and aspartate 392.

This sequence belongs to the plant acyltransferase family. N-terminus is blocked.

The enzyme catalyses anthranilate + benzoyl-CoA = N-benzoylanthranilate + CoA. It participates in phytoalexin biosynthesis; methoxydianthramide B biosynthesis. In terms of biological role, catalyzes the formation of N-benzoylanthranilate, in the course of methoxydianthramide B, a phytoalexin. Phytoalexins are produced in response to infection by parasites, and are essential for the expression of disease resistance. The chain is Anthranilate N-benzoyltransferase protein 3 (HCBT3) from Dianthus caryophyllus (Carnation).